Consider the following 402-residue polypeptide: Phosphoglycerate kinase (402 aa).

Substrate contacts are provided by residues 24 to 26 (DFN), arginine 40, 63 to 66 (HFGR), arginine 122, and arginine 155. ATP-binding positions include lysine 206, glycine 297, glutamate 328, and 357–360 (GGDS).

Belongs to the phosphoglycerate kinase family. Monomer.

Its subcellular location is the cytoplasm. The catalysed reaction is (2R)-3-phosphoglycerate + ATP = (2R)-3-phospho-glyceroyl phosphate + ADP. It functions in the pathway carbohydrate degradation; glycolysis; pyruvate from D-glyceraldehyde 3-phosphate: step 2/5. This is Phosphoglycerate kinase from Prochlorococcus marinus (strain MIT 9211).